A 328-amino-acid polypeptide reads, in one-letter code: Surface antigen CRP170 (328 aa).

2 repeats span residues 38–102 (NAPC…CKKC) and 103–167 (NAPC…CKKC).

This is Surface antigen CRP170 from Giardia intestinalis (Giardia lamblia).